A 252-amino-acid polypeptide reads, in one-letter code: Probable phosphatase Shewana3_2794 (252 aa).

H8, H10, H16, H41, E74, H102, H132, D193, and H195 together coordinate Zn(2+).

The protein belongs to the PHP family. Requires Zn(2+) as cofactor.

This chain is Probable phosphatase Shewana3_2794, found in Shewanella sp. (strain ANA-3).